Consider the following 322-residue polypeptide: Lignin-forming anionic peroxidase (322 aa).

The signal sequence occupies residues 1–27 (MNTPTQSFRAKAAIFSLLLLSCMQCHA). Residue Gln-28 is modified to Pyrrolidone carboxylic acid. 4 cysteine pairs are disulfide-bonded: Cys-38-Cys-118, Cys-71-Cys-76, Cys-124-Cys-318, and Cys-203-Cys-229. His-69 serves as the catalytic Proton acceptor. 5 residues coordinate Ca(2+): Asp-70, Val-73, Gly-75, Asp-77, and Ser-79. Substrate is bound at residue Pro-166. His-196 is a binding site for heme b. Residue Thr-197 participates in Ca(2+) binding. Residue Asn-213 is glycosylated (N-linked (GlcNAc...) asparagine). Positions 242, 245, and 250 each coordinate Ca(2+).

Belongs to the peroxidase family. Classical plant (class III) peroxidase subfamily. The cofactor is Ca(2+). Heme b is required as a cofactor. Mesophyll protoplasts and to a much lesser extent, roots and germinating seeds.

It localises to the secreted. The enzyme catalyses 2 a phenolic donor + H2O2 = 2 a phenolic radical donor + 2 H2O. Removal of H(2)O(2), oxidation of toxic reductants, biosynthesis and degradation of lignin, suberization, auxin catabolism, response to environmental stresses such as wounding, pathogen attack and oxidative stress. These functions might be dependent on each isozyme/isoform in each plant tissue. Functionally, plays an integral role in secondary cell wall biosynthesis by the polymerization of cinnamyl alcohols into lignin and by forming rigid cross-links between cellulose, pectin, hydroxy-proline-rich glycoproteins, and lignin. The sequence is that of Lignin-forming anionic peroxidase from Nicotiana sylvestris (Wood tobacco).